Consider the following 170-residue polypeptide: Large ribosomal subunit protein uL10 (170 aa).

It belongs to the universal ribosomal protein uL10 family. As to quaternary structure, part of the ribosomal stalk of the 50S ribosomal subunit. The N-terminus interacts with L11 and the large rRNA to form the base of the stalk. The C-terminus forms an elongated spine to which L12 dimers bind in a sequential fashion forming a multimeric L10(L12)X complex.

Functionally, forms part of the ribosomal stalk, playing a central role in the interaction of the ribosome with GTP-bound translation factors. The chain is Large ribosomal subunit protein uL10 from Chlamydia felis (strain Fe/C-56) (Chlamydophila felis).